The chain runs to 587 residues: Arginine--tRNA ligase (587 aa).

Residues 126–136 carry the 'HIGH' region motif; that stretch reads ANPTGPLHVGH.

This sequence belongs to the class-I aminoacyl-tRNA synthetase family. Monomer.

The protein localises to the cytoplasm. It carries out the reaction tRNA(Arg) + L-arginine + ATP = L-arginyl-tRNA(Arg) + AMP + diphosphate. The chain is Arginine--tRNA ligase from Aromatoleum aromaticum (strain DSM 19018 / LMG 30748 / EbN1) (Azoarcus sp. (strain EbN1)).